The following is a 357-amino-acid chain: MFDQLESIVGRYEELGELLSDPEVVSDTKRFMELSREEADLRDKVATYNEYKKVLETISDSEEMLGEGGLDDEMKEMLKEELSSAKSQKEVLEEEIKILLLPKDPNDGKNIILEIRGAAGGDEAALFAGDLLNMYQHFSESQGWKFEIMEANITGIGGYKEVSALISGPSVYSKLKYESGAHRVQRVPVTETQGRVHTSTATVLVMPEVEEFEMTIEQKDLRVDIYHASGAGGQNVNKVATAVRMVHLPTGIKVEMQEERTQQKNRDKAIKLLNTKVFDYYQQIELDKQNTERKSTVGTGDRSERIRTYNFPQNRVTDHRIGLTLQKLDSILSGKMDEVIDALIVYDQTKKLEELNK.

The residue at position 234 (Gln234) is an N5-methylglutamine.

This sequence belongs to the prokaryotic/mitochondrial release factor family. Post-translationally, methylated by PrmC. Methylation increases the termination efficiency of RF1.

The protein localises to the cytoplasm. In terms of biological role, peptide chain release factor 1 directs the termination of translation in response to the peptide chain termination codons UAG and UAA. The sequence is that of Peptide chain release factor 1 from Lactococcus lactis subsp. cremoris (strain MG1363).